We begin with the raw amino-acid sequence, 122 residues long: Large ribosomal subunit protein uL14 (122 aa).

Belongs to the universal ribosomal protein uL14 family. Part of the 50S ribosomal subunit. Forms a cluster with proteins L3 and L19. In the 70S ribosome, L14 and L19 interact and together make contacts with the 16S rRNA in bridges B5 and B8.

Functionally, binds to 23S rRNA. Forms part of two intersubunit bridges in the 70S ribosome. The protein is Large ribosomal subunit protein uL14 of Syntrophomonas wolfei subsp. wolfei (strain DSM 2245B / Goettingen).